The chain runs to 63 residues: Conotoxin Cal6.28 (63 aa).

Positions 1 to 22 are cleaved as a signal peptide; that stretch reads MKLTCVLIVAVLILTACQVIAA. Cystine bridges form between cysteine 34–cysteine 45, cysteine 37–cysteine 51, and cysteine 44–cysteine 58.

This sequence belongs to the conotoxin O1 superfamily. In terms of tissue distribution, expressed by the venom duct.

The protein resides in the secreted. In terms of biological role, probable neurotoxin. This is Conotoxin Cal6.28 from Californiconus californicus (California cone).